A 397-amino-acid chain; its full sequence is tRNA-specific 2-thiouridylase MnmA (397 aa).

ATP is bound by residues 19–26 (AMSGGVDS) and leucine 45. Cysteine 113 functions as the Nucleophile in the catalytic mechanism. An intrachain disulfide couples cysteine 113 to cysteine 210. An ATP-binding site is contributed by glycine 137. Residues 160 to 162 (RDQ) form an interaction with tRNA region. The active-site Cysteine persulfide intermediate is cysteine 210.

It belongs to the MnmA/TRMU family.

It localises to the cytoplasm. It catalyses the reaction S-sulfanyl-L-cysteinyl-[protein] + uridine(34) in tRNA + AH2 + ATP = 2-thiouridine(34) in tRNA + L-cysteinyl-[protein] + A + AMP + diphosphate + H(+). Catalyzes the 2-thiolation of uridine at the wobble position (U34) of tRNA, leading to the formation of s(2)U34. The protein is tRNA-specific 2-thiouridylase MnmA of Rhodopseudomonas palustris (strain ATCC BAA-98 / CGA009).